A 561-amino-acid chain; its full sequence is Transcription factor Clamp (561 aa).

The C2H2-type 1 zinc finger occupies 127–149; that stretch reads FKCDVCSDMFPHLALLNAHKRMH. Zn(2+) is bound by residues C129, C132, H145, and H149. The tract at residues 290–315 is disordered; sequence TGGTTPKREASSGSGHHPVKKRNSQQ. 6 C2H2-type zinc fingers span residues 360–382, 388–410, 416–438, 444–466, 472–494, and 500–522; these read FSCNICGGLFSRYSSLWSHKKLH, YKCSICGLAFAKAVYLKNHARIH, YKCQTCGMQFSQSPHLKNHERTH, YVCGVCDKGFARHATLWNHRRIH, YKCEICGSAFSQAAHLKNHAKVH, and YKCEICSAAFADRFALKRHRGIH.

In terms of assembly, homodimer. Interacts with msl-2; promoting recruitment of the male-specific lethal (MSL) histone acetyltransferase complex to chromatin. Interacts with Nelf-A. Interacts with NELF-B.

Its subcellular location is the nucleus. It localises to the chromosome. Transcription factor involved in X-chromosome dosage compensation in males, the process by which transcription of the single X chromosome in the male is elevated. Binds to the DNA sequence (GA)n. Clamp-binding promotes nucleosome depletion and chromatin accessibility, thereby allowing access to other transcription factors. Specifically binds to cis-acting elements on the X-chromosome named chromatin entry sites and promotes recruitment of the male-specific lethal (MSL) histone acetyltransferase complex, which associates with actively transcribed genes on the male X-chromosome to upregulate their expression. Mechanistically, acts by promoting chromatin accessibility at chromatin entry sites, facilitating DNA-binding of msl-2, followed by MSL complex recruitment. In addition to dosage compensation, also involved in zygotic genome activation (ZGA), a critical event in early embryonic development during which the developmental control passes from maternally provided mRNAs to the expression of the zygotic genome after fertilization. Maternally-provided protein cooperates with Zelda (zld) to activate zygotic transcription by increasing chromatin accessibility at promoters of specific genes and facilitate zld occupancy at a subset of key embryonic promoters. Also acts as an activator of gypsy chromatin insulator function by promoting binding of Cp190 to chromatin. This Drosophila melanogaster (Fruit fly) protein is Transcription factor Clamp.